We begin with the raw amino-acid sequence, 330 residues long: Aspartate--ammonia ligase (330 aa).

It belongs to the class-II aminoacyl-tRNA synthetase family. AsnA subfamily.

Its subcellular location is the cytoplasm. The enzyme catalyses L-aspartate + NH4(+) + ATP = L-asparagine + AMP + diphosphate + H(+). It participates in amino-acid biosynthesis; L-asparagine biosynthesis; L-asparagine from L-aspartate (ammonia route): step 1/1. The chain is Aspartate--ammonia ligase from Shigella dysenteriae serotype 1 (strain Sd197).